Reading from the N-terminus, the 135-residue chain is Holo-[acyl-carrier-protein] synthase (135 aa).

Positions 8 and 58 each coordinate Mg(2+).

Belongs to the P-Pant transferase superfamily. AcpS family. Requires Mg(2+) as cofactor.

Its subcellular location is the cytoplasm. It carries out the reaction apo-[ACP] + CoA = holo-[ACP] + adenosine 3',5'-bisphosphate + H(+). Functionally, transfers the 4'-phosphopantetheine moiety from coenzyme A to a Ser of acyl-carrier-protein. This is Holo-[acyl-carrier-protein] synthase from Ligilactobacillus salivarius (strain UCC118) (Lactobacillus salivarius).